Here is a 405-residue protein sequence, read N- to C-terminus: Serine/threonine transporter SstT (405 aa).

9 consecutive transmembrane segments (helical) span residues 13–33 (GNLV…ATFS), 43–63 (IGNL…FILV), 81–101 (IVVL…ILSF), 140–160 (ALMN…GLAL), 191–211 (FGIF…ALAG), 215–235 (LLAV…PMIV), 297–317 (MAGA…TMGI), 338–358 (ASGV…LFGI), and 362–382 (IAMQ…SAET).

Belongs to the dicarboxylate/amino acid:cation symporter (DAACS) (TC 2.A.23) family.

The protein resides in the cell inner membrane. The catalysed reaction is L-serine(in) + Na(+)(in) = L-serine(out) + Na(+)(out). It catalyses the reaction L-threonine(in) + Na(+)(in) = L-threonine(out) + Na(+)(out). In terms of biological role, involved in the import of serine and threonine into the cell, with the concomitant import of sodium (symport system). The sequence is that of Serine/threonine transporter SstT from Vibrio cholerae serotype O1 (strain ATCC 39315 / El Tor Inaba N16961).